A 192-amino-acid chain; its full sequence is Pyridoxal 5'-phosphate synthase subunit PdxT (192 aa).

50 to 52 (GES) serves as a coordination point for L-glutamine. Cysteine 82 functions as the Nucleophile in the catalytic mechanism. L-glutamine contacts are provided by residues arginine 109 and 136 to 137 (IR). Catalysis depends on charge relay system residues histidine 172 and glutamate 174.

This sequence belongs to the glutaminase PdxT/SNO family. In terms of assembly, in the presence of PdxS, forms a dodecamer of heterodimers. Only shows activity in the heterodimer.

The catalysed reaction is aldehydo-D-ribose 5-phosphate + D-glyceraldehyde 3-phosphate + L-glutamine = pyridoxal 5'-phosphate + L-glutamate + phosphate + 3 H2O + H(+). It catalyses the reaction L-glutamine + H2O = L-glutamate + NH4(+). It participates in cofactor biosynthesis; pyridoxal 5'-phosphate biosynthesis. In terms of biological role, catalyzes the hydrolysis of glutamine to glutamate and ammonia as part of the biosynthesis of pyridoxal 5'-phosphate. The resulting ammonia molecule is channeled to the active site of PdxS. This Haemophilus influenzae (strain PittEE) protein is Pyridoxal 5'-phosphate synthase subunit PdxT.